The sequence spans 690 residues: Glutamate--cysteine ligase (690 aa).

Low complexity-rich tracts occupy residues 574-585 (QQQNGHVNNNNN) and 598-619 (NGST…TNGT). The interval 574–620 (QQQNGHVNNNNNNDKKTKNDPIIVNGSTTTTNGTNSGSGITETNGTM) is disordered.

Belongs to the glutamate--cysteine ligase type 3 family.

The catalysed reaction is L-cysteine + L-glutamate + ATP = gamma-L-glutamyl-L-cysteine + ADP + phosphate + H(+). It functions in the pathway sulfur metabolism; glutathione biosynthesis; glutathione from L-cysteine and L-glutamate: step 1/2. The protein is Glutamate--cysteine ligase (GCS1) of Candida albicans (Yeast).